Reading from the N-terminus, the 572-residue chain is Urease subunit alpha (572 aa).

Residues 133–572 form the Urease domain; the sequence is GGIDLHVHYI…TSLSQRYFLF (440 aa). Ni(2+) contacts are provided by His-138, His-140, and Lys-221. Lys-221 is modified (N6-carboxylysine). Residue His-223 participates in substrate binding. Positions 250 and 276 each coordinate Ni(2+). Residue His-324 is the Proton donor of the active site. A Ni(2+)-binding site is contributed by Asp-364.

It belongs to the metallo-dependent hydrolases superfamily. Urease alpha subunit family. In terms of assembly, heterotrimer of UreA (gamma), UreB (beta) and UreC (alpha) subunits. Three heterotrimers associate to form the active enzyme. The cofactor is Ni cation. Carboxylation allows a single lysine to coordinate two nickel ions.

The protein localises to the cytoplasm. It carries out the reaction urea + 2 H2O + H(+) = hydrogencarbonate + 2 NH4(+). Its pathway is nitrogen metabolism; urea degradation; CO(2) and NH(3) from urea (urease route): step 1/1. Functionally, ureolysis may allow urea to be employed as a nitrogen source for growth and produces ammonia which may protect from killing at low pH. This chain is Urease subunit alpha, found in Streptococcus salivarius (strain 57.I).